A 188-amino-acid chain; its full sequence is Hypoxanthine/guanine phosphoribosyltransferase (188 aa).

This sequence belongs to the purine/pyrimidine phosphoribosyltransferase family. Archaeal HPRT subfamily. As to quaternary structure, homodimer.

It is found in the cytoplasm. The catalysed reaction is IMP + diphosphate = hypoxanthine + 5-phospho-alpha-D-ribose 1-diphosphate. The enzyme catalyses GMP + diphosphate = guanine + 5-phospho-alpha-D-ribose 1-diphosphate. It participates in purine metabolism; IMP biosynthesis via salvage pathway; IMP from hypoxanthine: step 1/1. Catalyzes a salvage reaction resulting in the formation of IMP that is energically less costly than de novo synthesis. The sequence is that of Hypoxanthine/guanine phosphoribosyltransferase from Methanobrevibacter ruminantium (strain ATCC 35063 / DSM 1093 / JCM 13430 / OCM 146 / M1) (Methanobacterium ruminantium).